The sequence spans 102 residues: Small ribosomal subunit protein uS10 (102 aa).

It belongs to the universal ribosomal protein uS10 family. In terms of assembly, part of the 30S ribosomal subunit.

Its function is as follows. Involved in the binding of tRNA to the ribosomes. This Streptococcus sanguinis (strain SK36) protein is Small ribosomal subunit protein uS10.